An 806-amino-acid chain; its full sequence is MQFFGRLVNTFSGVTNLFSNPFRVKEVAVADYTSSDRVREEGQLILFQNTPNRTWDCVLVNPRNSQSGFRLFQLELEADALVNFHQYSSQLLPFYESSPQVLHTEVLQHLTDLIRNHPSWSVAHLAVELGIRECFHHSRIISCANCAENEEGCTPLHLACRKGDGEILVELVQYCHTQMDVTDYKGETVFHYAVQGDNSQVLQLLGRNAVAGLNQVNNQGLTPLHLACQLGKQEMVRVLLLCNARCNIMGPNGYPIHSAMKFSQKGCAEMIISMDSSQIHSKDPRYGASPLHWAKNAEMARMLLKRGCNVNSTSSAGNTALHVAVMRNRFDCAIVLLTHGANADARGEHGNTPLHLAMSKDNVEMIKALIVFGAEVDTPNDFGETPTFLASKIGRLVTRKAILTLLRTVGAEYCFPPIHGVPAEQGSAAPHHPFSLERAQPPPISLNNLELQDLMHISRARKPAFILGSMRDEKRTHDHLLCLDGGGVKGLIIIQLLIAIEKASGVATKDLFDWVAGTSTGGILALAILHSKSMAYMRGMYFRMKDEVFRGSRPYESGPLEEFLKREFGEHTKMTDVRKPKVMLTGTLSDRQPAELHLFRNYDAPETVREPRFNQNVNLRPPAQPSDQLVWRAARSSGAAPTYFRPNGRFLDGGLLANNPTLDAMTEIHEYNQDLIRKGQANKVKKLSIVVSLGTGRSPQVPVTCVDVFRPSNPWELAKTVFGAKELGKMVVDCCTDPDGRAVDRARAWCEMVGIQYFRLNPQLGTDIMLDEVSDTVLVNALWETEVYIYEHREEFQKLIQLLLSP.

9 ANK repeats span residues 120–147, 151–181, 185–215, 219–248, 251–281, 286–312, 316–345, 349–378, and 382–403; these read WSVA…ANCA, EGCT…QMDV, KGET…GLNQ, QGLT…RCNI, PNGY…QIHS, YGAS…NVNS, AGNT…NADA, HGNT…EVDT, and FGET…KAIL. 2 helical membrane passes run 480–500 and 511–531; these read LLCL…LIAI and LFDW…ILHS. One can recognise a PNPLA domain in the interval 481–665; it reads LCLDGGGVKG…LANNPTLDAM (185 aa). The GXGXXG motif lies at 485–490; it reads GGGVKG. The GXSXG motif lies at 517–521; sequence GTSTG. S519 serves as the catalytic Nucleophile. D652 serves as the catalytic Proton acceptor. Residues 652-654 carry the DGA/G motif; sequence DGG. The calmodulin-binding (1-9-14 motif) stretch occupies residues 677–686; the sequence is RKGQANKVKK. A calmodulin-binding (IQ motif) region spans residues 748 to 759; sequence AWCEMVGIQYFR.

In terms of assembly, homodimer formed by catalytic domains tightly interacting through a large hydrophobic interface. The contact area involves 3 alpha helices, several loops and a part of the beta sheet from each monomer. Both active sites of the dimer are in close proximity adopting an open conformation that provide sufficient space for phospholipid access and favoring cooperativity in deacylation-reacylation reactions. Each monomer has 9 ankyrin repeats stacked side-by-side in an elongated structure oriented outwards from the catalytic core. In terms of tissue distribution, four different transcripts were found to be expressed in a distinct tissue distribution.

The protein resides in the cytoplasm. It is found in the cell membrane. The protein localises to the mitochondrion. It localises to the cell projection. Its subcellular location is the pseudopodium. The enzyme catalyses a 1,2-diacyl-sn-glycero-3-phosphocholine + H2O = a 1-acyl-sn-glycero-3-phosphocholine + a fatty acid + H(+). The catalysed reaction is a 1-O-alkyl-2-acyl-sn-glycero-3-phosphocholine + H2O = a 1-O-alkyl-sn-glycero-3-phosphocholine + a fatty acid + H(+). It carries out the reaction 1,2-dihexadecanoyl-sn-glycero-3-phosphocholine + H2O = 1-hexadecanoyl-sn-glycero-3-phosphocholine + hexadecanoate + H(+). It catalyses the reaction 1-hexadecanoyl-2-(9Z-octadecenoyl)-sn-glycero-3-phosphocholine + H2O = 1-hexadecanoyl-sn-glycero-3-phosphocholine + (9Z)-octadecenoate + H(+). The enzyme catalyses 1-hexadecanoyl-2-(9Z,12Z-octadecadienoyl)-sn-glycero-3-phosphocholine + H2O = (9Z,12Z)-octadecadienoate + 1-hexadecanoyl-sn-glycero-3-phosphocholine + H(+). The catalysed reaction is 1-hexadecanoyl-2-(5Z,8Z,11Z,14Z-eicosatetraenoyl)-sn-glycero-3-phosphocholine + H2O = 1-hexadecanoyl-sn-glycero-3-phosphocholine + (5Z,8Z,11Z,14Z)-eicosatetraenoate + H(+). It carries out the reaction 1-octadecanoyl-2-(5Z,8Z,11Z,14Z-eicosatetraenoyl)-sn-glycero-3-phosphocholine + H2O = 1-octadecanoyl-sn-glycero-3-phosphocholine + (5Z,8Z,11Z,14Z)-eicosatetraenoate + H(+). It catalyses the reaction 1-hexadecanoyl-2-(5Z,8Z,11Z,14Z-eicosatetraenoyl)-sn-glycero-3-phosphoethanolamine + H2O = 1-hexadecanoyl-sn-glycero-3-phosphoethanolamine + (5Z,8Z,11Z,14Z)-eicosatetraenoate + H(+). The enzyme catalyses 1,2-dihexadecanoyl-sn-glycero-3-phosphate + H2O = 1-hexadecanoyl-sn-glycero-3-phosphate + hexadecanoate + H(+). The catalysed reaction is a 1-acyl-sn-glycero-3-phosphocholine + H2O = sn-glycerol 3-phosphocholine + a fatty acid + H(+). It carries out the reaction 1-hexadecanoyl-sn-glycero-3-phosphocholine + H2O = sn-glycerol 3-phosphocholine + hexadecanoate + H(+). It catalyses the reaction 1-(5Z,8Z,11Z,14Z-eicosatetraenoyl)-sn-glycero-3-phosphocholine + H2O = sn-glycerol 3-phosphocholine + (5Z,8Z,11Z,14Z)-eicosatetraenoate + H(+). The enzyme catalyses 2-(5Z,8Z,11Z,14Z)-eicosatetraenoyl-sn-glycero-3-phosphocholine + H2O = sn-glycerol 3-phosphocholine + (5Z,8Z,11Z,14Z)-eicosatetraenoate + H(+). The catalysed reaction is 1-O-hexadecyl-2-(5Z,8Z,11Z,14Z)-eicosatetraenoyl-sn-glycero-3-phosphocholine + H2O = 1-O-hexadecyl-sn-glycero-3-phosphocholine + (5Z,8Z,11Z,14Z)-eicosatetraenoate + H(+). It carries out the reaction 1-O-hexadecyl-2-acetyl-sn-glycero-3-phosphocholine + H2O = 1-O-hexadecyl-sn-glycero-3-phosphocholine + acetate + H(+). It catalyses the reaction hexadecanoyl-CoA + H2O = hexadecanoate + CoA + H(+). The enzyme catalyses 1',3'-bis[1,2-di-(9Z-octadecenoyl)-sn-glycero-3-phospho]-glycerol + H2O = 1'-[1,2-di-(9Z-octadecenoyl)-sn-glycero-3-phospho]-3'-[1-(9Z-octadecenoyl)-sn-glycero-3-phospho]-glycerol + (9Z)-octadecenoate + H(+). The catalysed reaction is 1'-[1,2-di-(9Z-octadecenoyl)-sn-glycero-3-phospho]-3'-[1-(9Z-octadecenoyl)-sn-glycero-3-phospho]-glycerol + H2O = 1',3'-bis-[1-(9Z-octadecenoyl)-sn-glycero-3-phospho]-glycerol + (9Z)-octadecenoate + H(+). It carries out the reaction 1',3'-bis-[1,2-di-(9Z,12Z-octadecadienoyl)-sn-glycero-3-phospho]-glycerol + H2O = 1'-[1,2-di-(9Z,12Z-octadecadienoyl)-sn-glycero-3-phospho]-3'-[1-(9Z,12Z-octadecadienoyl)-sn-glycero-3-phospho]-glycerol + (9Z,12Z)-octadecadienoate + H(+). It catalyses the reaction 1-octadecanoyl-2-(15-hydroxy-(5Z,8Z,11Z,13E)-eicosatetraenoyl)-sn-glycero-3-phosphoethanolamine + H2O = 1-octadecanoyl-sn-glycero-3-phosphoethanolamine + 15-hydroxy-(5Z,8Z,11Z,13E)-eicosatetraenoate + H(+). With respect to regulation, activated by ATP. Inhibited by calcium-activated calmodulin. Inhibited by bromoenol lactone (BEL). Its function is as follows. Calcium-independent phospholipase involved in phospholipid remodeling with implications in cellular membrane homeostasis, mitochondrial integrity and signal transduction. Hydrolyzes the ester bond of the fatty acyl group attached at sn-1 or sn-2 position of phospholipids (phospholipase A1 and A2 activity respectively), producing lysophospholipids that are used in deacylation-reacylation cycles. Hydrolyzes both saturated and unsaturated long fatty acyl chains in various glycerophospholipid classes such as phosphatidylcholines, phosphatidylethanolamines and phosphatidates, with a preference for hydrolysis at sn-2 position. Can further hydrolyze lysophospholipids carrying saturated fatty acyl chains (lysophospholipase activity). Upon oxidative stress, contributes to remodeling of mitochondrial phospholipids in pancreatic beta cells, in a repair mechanism to reduce oxidized lipid content. Preferentially hydrolyzes oxidized polyunsaturated fatty acyl chains from cardiolipins, yielding monolysocardiolipins that can be reacylated with unoxidized fatty acyls to regenerate native cardiolipin species. Hydrolyzes oxidized glycerophosphoethanolamines present in pancreatic islets, releasing oxidized polyunsaturated fatty acids such as hydroxyeicosatetraenoates (HETEs). Has thioesterase activity toward fatty-acyl CoA releasing CoA-SH known to facilitate fatty acid transport and beta-oxidation in mitochondria particularly in skeletal muscle. Plays a role in regulation of membrane dynamics and homeostasis. Selectively hydrolyzes sn-2 arachidonoyl group in plasmalogen phospholipids, structural components of lipid rafts and myelin. Regulates F-actin polymerization at the pseudopods, which is required for both speed and directionality of MCP1/CCL2-induced monocyte chemotaxis. Targets membrane phospholipids to produce potent lipid signaling messengers. Generates lysophosphatidate (LPA, 1-acyl-glycerol-3-phosphate), which acts via G-protein receptors in various cell types. Has phospholipase A2 activity toward platelet-activating factor (PAF, 1-O-alkyl-2-acetyl-sn-glycero-3-phosphocholine), likely playing a role in inactivation of this potent pro-inflammatory signaling lipid. In response to glucose, amplifies calcium influx in pancreatic beta cells to promote INS secretion. In terms of biological role, lacks the catalytic domain and may act as a negative regulator of the catalytically active isoforms. The polypeptide is 85/88 kDa calcium-independent phospholipase A2 (PLA2G6) (Homo sapiens (Human)).